Consider the following 307-residue polypeptide: MKTFLVFALLAVAATSAIAQMETRCIPGLERPWQQQPLPPQQTFPQQPLFSQQQQQQLFPQQPSFSQQQPPFWQQQPPFSQQQPILPQQPPFSQQQQLVLPQQPPFSQQQQPVLPPQQSPFPQQQQQHQQLVQQQIPVVQPSILQQLNPCKVFLQQQCSPVAMPQRLARSQMLQQSSCHVMQQQCCQQLPQIPQQSRYEAIRAIIYSIILQEQQQVQGSIQSQQQQPQQLGQCVSQPQQQSQQQLGQQPQQQQLAQGTFLQPHQIAQLEVMTSIALRILPTMCSVNVPLYRTTTSVPFGVGTGVGAY.

An N-terminal signal peptide occupies residues 1-23; the sequence is MKTFLVFALLAVAATSAIAQMET. Disordered stretches follow at residues 31–88 and 105–126; these read RPWQ…ILPQ and PFSQQQQPVLPPQQSPFPQQQQ. Residues 43–88 show a composition bias toward low complexity; that stretch reads TFPQQPLFSQQQQQQLFPQQPSFSQQQPPFWQQQPPFSQQQPILPQ.

The protein belongs to the gliadin/glutenin family. Disulfide-bridge linked aggregates. Expressed in endosperm, but not in husk and leaf tissues.

Its function is as follows. Glutenins are high-molecular weight seed storage proteins of wheat endosperm. Thought to be responsible for the visco-elastic property of wheat dough. This is Glutenin, low molecular weight subunit 1D1 from Triticum aestivum (Wheat).